A 145-amino-acid chain; its full sequence is MRALVQRVTSASVRVDGDEVGRITPPAGGHGLLVLVGVTHTDDEAKAALLAKKVWTMRILENEQSASDLDAPVLVASQFTLMADTRRGRRPSWSAAAPRPVAEPLVDEFTGALRELGATVETGVFGEHMEISLVNDGPVTLLIDV.

The Gly-cisPro motif, important for rejection of L-amino acids signature appears at 137–138 (GP).

Belongs to the DTD family. In terms of assembly, homodimer.

It is found in the cytoplasm. It carries out the reaction glycyl-tRNA(Ala) + H2O = tRNA(Ala) + glycine + H(+). It catalyses the reaction a D-aminoacyl-tRNA + H2O = a tRNA + a D-alpha-amino acid + H(+). An aminoacyl-tRNA editing enzyme that deacylates mischarged D-aminoacyl-tRNAs. Also deacylates mischarged glycyl-tRNA(Ala), protecting cells against glycine mischarging by AlaRS. Acts via tRNA-based rather than protein-based catalysis; rejects L-amino acids rather than detecting D-amino acids in the active site. By recycling D-aminoacyl-tRNA to D-amino acids and free tRNA molecules, this enzyme counteracts the toxicity associated with the formation of D-aminoacyl-tRNA entities in vivo and helps enforce protein L-homochirality. The polypeptide is D-aminoacyl-tRNA deacylase (Rhodococcus jostii (strain RHA1)).